Consider the following 248-residue polypeptide: MSLIPSLSLLLMSMVAASYSETVTCEDAQKTCPAVIACSSPGINGFPGKDGRDGTKGEKGEPGQGLRGLQGPPGKLGPPGNPGPSGSPGPKGQKGDPGNSPDCDSSLAVSERKALQTEMARIKKWLTFSLGKQVGNKFFLTNGEMMTFEKVKALCVKFQASVATPRNAAENRAIQNLIKEEAFMGITDEKTEGQFVDLTGNRLTYTNWNEGEPNNAGSDEDCVLLLRNGRWNDVPCSSSHLAVCEFPI.

A signal peptide spans 1-20 (MSLIPSLSLLLMSMVAASYS). The Collagen-like domain occupies 42–99 (GINGFPGKDGRDGTKGEKGEPGQGLRGLQGPPGKLGPPGNPGPSGSPGPKGQKGDPGN). Residues 43–110 (INGFPGKDGR…PDCDSSLAVS (68 aa)) are disordered. Position 47 is a 4-hydroxyproline (P47). The segment covering 49 to 61 (KDGRDGTKGEKGE) has biased composition (basic and acidic residues). P73, P79, P82, and P88 each carry 4-hydroxyproline. The segment covering 75-87 (KLGPPGNPGPSGS) has biased composition (pro residues). The stretch at 112–130 (RKALQTEMARIKKWLTFSL) forms a coiled coil. The C-type lectin domain maps to 134 to 245 (VGNKFFLTNG…CSSSHLAVCE (112 aa)). 2 disulfides stabilise this stretch: C155-C244 and C222-C236.

In terms of assembly, oligomeric complex of 3 or more homotrimers. Interacts with MASP1 and MASP2. Interacts with MEP1A and MEP1B and may inhibit their catalytic activity. In terms of processing, hydroxylation on proline residues within the sequence motif, GXPG, is most likely to be 4-hydroxy as this fits the requirement for 4-hydroxylation in vertebrates.

The protein resides in the secreted. Functionally, calcium-dependent lectin involved in innate immune defense. Binds mannose, fucose and N-acetylglucosamine on different microorganisms and activates the lectin complement pathway. Binds to late apoptotic cells, as well as to apoptotic blebs and to necrotic cells, but not to early apoptotic cells, facilitating their uptake by macrophages. The polypeptide is Mannose-binding protein C (MBL2) (Nomascus concolor (Black crested gibbon)).